The primary structure comprises 315 residues: Ankyrin repeat domain-containing protein SOWAHD (315 aa).

The disordered stretch occupies residues methionine 1–leucine 39. 3 ANK repeats span residues proline 112–leucine 141, threonine 147–glutamate 162, and glycine 186–arginine 216.

Belongs to the SOWAH family.

This is Ankyrin repeat domain-containing protein SOWAHD (SOWAHD) from Homo sapiens (Human).